The primary structure comprises 313 residues: Peroxidase 57 (313 aa).

An N-terminal signal peptide occupies residues 1-22 (MMKGAKFSSLLVLFFIFPIAFA). 4 disulfides stabilise this stretch: Cys33/Cys109, Cys66/Cys71, Cys115/Cys309, and Cys192/Cys224. His64 functions as the Proton acceptor in the catalytic mechanism. Ca(2+)-binding residues include Asp65, Val68, Gly70, Asp72, and Ser74. Pro155 provides a ligand contact to substrate. His185 is a heme b binding site. Thr186 contributes to the Ca(2+) binding site. Positions 233, 236, and 241 each coordinate Ca(2+).

The protein belongs to the peroxidase family. Classical plant (class III) peroxidase subfamily. It depends on heme b as a cofactor. Ca(2+) serves as cofactor. Mainly expressed in roots.

The protein localises to the secreted. It carries out the reaction 2 a phenolic donor + H2O2 = 2 a phenolic radical donor + 2 H2O. Its function is as follows. Removal of H(2)O(2), oxidation of toxic reductants, biosynthesis and degradation of lignin, suberization, auxin catabolism, response to environmental stresses such as wounding, pathogen attack and oxidative stress. These functions might be dependent on each isozyme/isoform in each plant tissue. The sequence is that of Peroxidase 57 (PER57) from Arabidopsis thaliana (Mouse-ear cress).